The sequence spans 198 residues: NAD(P)H dehydrogenase (quinone) (198 aa).

One can recognise a Flavodoxin-like domain in the interval 4–189 (VLVLYYSMYG…ALARYQGRHV (186 aa)). Residues 10 to 15 (SMYGHV) and 78 to 80 (TRF) each bind FMN. Tyrosine 12 provides a ligand contact to NAD(+). Residue tryptophan 98 coordinates substrate. FMN contacts are provided by residues 113–118 (STGTGG) and histidine 133.

Belongs to the WrbA family. FMN serves as cofactor.

It catalyses the reaction a quinone + NADH + H(+) = a quinol + NAD(+). It carries out the reaction a quinone + NADPH + H(+) = a quinol + NADP(+). This chain is NAD(P)H dehydrogenase (quinone), found in Halorhodospira halophila (strain DSM 244 / SL1) (Ectothiorhodospira halophila (strain DSM 244 / SL1)).